A 359-amino-acid chain; its full sequence is Guanine nucleotide-binding protein G(o) subunit alpha (359 aa).

The tract at residues 1-26 (MGGCVSATPEEREAKTRSSVIDRQQR) is disordered. Gly2 is lipidated: N-myristoyl glycine. Cys4 carries the S-palmitoyl cysteine lipid modification. Residues 34-359 (NTIKILLLGA…RENLEAANLL (326 aa)) enclose the G-alpha domain. Residues 37-50 (KILLLGAGESGKST) form a G1 motif region. Residues 42-49 (GAGESGKS), 178-184 (LRSRVQT), 203-207 (DVGGQ), 272-275 (NKAD), and Ala331 contribute to the GTP site. Residues Ser49 and Thr184 each coordinate Mg(2+). Residues 176 to 184 (DVLRSRVQT) form a G2 motif region. The tract at residues 199–208 (YRVVDVGGQR) is G3 motif. The G4 motif stretch occupies residues 268–275 (ILFLNKAD). Residues 329-334 (TTATDT) are G5 motif.

This sequence belongs to the G-alpha family. G(i/o/t/z) subfamily. As to quaternary structure, g proteins are composed of 3 units; alpha, beta and gamma. The alpha chain contains the guanine nucleotide binding site.

Guanine nucleotide-binding proteins (G proteins) are involved as modulators or transducers in various transmembrane signaling systems. The G(o) protein function is not clear. The polypeptide is Guanine nucleotide-binding protein G(o) subunit alpha (Geodia cydonium (Sponge)).